The sequence spans 361 residues: D-alanine--D-alanine ligase (361 aa).

The region spanning Lys134 to Asp344 is the ATP-grasp domain. Lys167–Glu222 is a binding site for ATP. Mg(2+) contacts are provided by Asp297, Glu311, and Asn313.

The protein belongs to the D-alanine--D-alanine ligase family. The cofactor is Mg(2+). Requires Mn(2+) as cofactor.

Its subcellular location is the cytoplasm. It carries out the reaction 2 D-alanine + ATP = D-alanyl-D-alanine + ADP + phosphate + H(+). The protein operates within cell wall biogenesis; peptidoglycan biosynthesis. Cell wall formation. The protein is D-alanine--D-alanine ligase of Borreliella afzelii (strain PKo) (Borrelia afzelii).